A 327-amino-acid chain; its full sequence is Cytochrome f (327 aa).

Positions 1–24 are cleaved as a signal peptide; sequence MKRIYLALCALLLLLGTGSRPAAA. Heme-binding residues include Tyr-25, Cys-45, Cys-48, and His-49. Residues 293 to 313 form a helical membrane-spanning segment; it reads VKWLVAFLAAVAITQLLLVLK.

It belongs to the cytochrome f family. In terms of assembly, the 4 large subunits of the cytochrome b6-f complex are cytochrome b6, subunit IV (17 kDa polypeptide, PetD), cytochrome f and the Rieske protein, while the 4 small subunits are PetG, PetL, PetM and PetN. The complex functions as a dimer. Heme serves as cofactor.

The protein resides in the cellular thylakoid membrane. In terms of biological role, component of the cytochrome b6-f complex, which mediates electron transfer between photosystem II (PSII) and photosystem I (PSI), cyclic electron flow around PSI, and state transitions. The sequence is that of Cytochrome f from Synechococcus sp. (strain JA-3-3Ab) (Cyanobacteria bacterium Yellowstone A-Prime).